A 166-amino-acid polypeptide reads, in one-letter code: Heme-degrading monooxygenase HmoB (166 aa).

Asn33 serves as a coordination point for Fe cation. The 88-residue stretch at 66–153 folds into the ABM domain; sequence FAVLNNIAVT…SAGIDTTSIF (88 aa). His138 contributes to the heme binding site.

Belongs to the antibiotic biosynthesis monooxygenase family. As to quaternary structure, homodimer.

The protein resides in the cytoplasm. It carries out the reaction heme b + 3 reduced [NADPH--hemoprotein reductase] + 3 O2 = biliverdin IXalpha + CO + Fe(2+) + 3 oxidized [NADPH--hemoprotein reductase] + 3 H2O + H(+). Its function is as follows. Catalyzes the oxidative degradation of the heme macrocyclic porphyrin ring in the presence of a suitable electron donor such as ascorbate or NADPH--cytochrome P450 reductase, with subsequent release of free iron. In Bacillus subtilis (strain 168), this protein is Heme-degrading monooxygenase HmoB (hmoB).